A 160-amino-acid chain; its full sequence is Protein max (160 aa).

Over residues 1-13 (MSDNDDIEVESDE) the composition is skewed to acidic residues. The interval 1–40 (MSDNDDIEVESDEEQPRFQSAADKRAHHNALERKRRDHIK) is disordered. Serine 2 bears the N-acetylserine mark. Phosphoserine is present on residues serine 2 and serine 11. The 52-residue stretch at 23–74 (DKRAHHNALERKRRDHIKDSFHSLRDSVPSLQGEKASRAQILDKATEYIQYM) folds into the bHLH domain. Positions 29-40 (NALERKRRDHIK) are enriched in basic and acidic residues. The residue at position 66 (lysine 66) is an N6-acetyllysine. The interval 81-102 (HQQDIDDLKRQNALLEQQVRAL) is leucine-zipper. A disordered region spans residues 105-160 (ARSSAQLQTNYPSSDNSLYTNAKGGTISAFDGGSDSSSESEPEEPQNRKKLRMEAS). Position 107 is a phosphoserine (serine 107). The span at 107 to 124 (SSAQLQTNYPSSDNSLYT) shows a compositional bias: polar residues. An N6-acetyllysine mark is found at lysine 153 and lysine 154.

This sequence belongs to the MAX family. As to quaternary structure, efficient DNA binding requires dimerization with another bHLH protein. Binds DNA as a heterodimer with MYC or MAD. Part of the E2F6.com-1 complex in G0 phase composed of E2F6, MGA, MAX, TFDP1, CBX3, BAT8, EUHMTASE1, RING1, RNF2, MBLR, L3MBTL2 and YAF2. Component of some MLL1/MLL complex, at least composed of the core components KMT2A/MLL1, ASH2L, HCFC1/HCF1, WDR5 and RBBP5, as well as the facultative components BACC1, CHD8, E2F6, HSP70, INO80C, KANSL1, LAS1L, MAX, MCRS1, MGA, MYST1/MOF, PELP1, PHF20, PRP31, RING2, RUVB1/TIP49A, RUVB2/TIP49B, SENP3, TAF1, TAF4, TAF6, TAF7, TAF9 and TEX10. Interacts with SPAG9. The heterodimer MYC:MAX interacts with ABI1; the interaction may enhance MYC:MAX transcriptional activity. Post-translationally, phosphorylated.

Its subcellular location is the nucleus. It is found in the cell projection. The protein localises to the dendrite. Its function is as follows. Transcription regulator. Forms a sequence-specific DNA-binding protein complex with MYC or MAD which recognizes the core sequence 5'-CAC[GA]TG-3'. The MYC:MAX complex is a transcriptional activator, whereas the MAD:MAX complex is a repressor. May repress transcription via the recruitment of a chromatin remodeling complex containing H3 'Lys-9' histone methyltransferase activity. Represses MYC transcriptional activity from E-box elements. The polypeptide is Protein max (Rattus norvegicus (Rat)).